The primary structure comprises 197 residues: NADH-quinone oxidoreductase subunit I 2 (197 aa).

4Fe-4S ferredoxin-type domains follow at residues 42–71 (GVIGLFEENCTVCMLCARECPDWCIYIDSH) and 91–120 (DRFAIDFALCMYCGICIEVCPFDALFWSPE). 8 residues coordinate [4Fe-4S] cluster: cysteine 51, cysteine 54, cysteine 57, cysteine 61, cysteine 100, cysteine 103, cysteine 106, and cysteine 110. Residues 147 to 197 (APPALDPGAEEPKELAAARKAADKLAAQQQPDQPGPDHPGQPDESGQEGRT) form a disordered region. Over residues 156–169 (EEPKELAAARKAAD) the composition is skewed to basic and acidic residues.

It belongs to the complex I 23 kDa subunit family. In terms of assembly, NDH-1 is composed of 14 different subunits. Subunits NuoA, H, J, K, L, M, N constitute the membrane sector of the complex. [4Fe-4S] cluster serves as cofactor.

It localises to the cell membrane. It carries out the reaction a quinone + NADH + 5 H(+)(in) = a quinol + NAD(+) + 4 H(+)(out). Functionally, NDH-1 shuttles electrons from NADH, via FMN and iron-sulfur (Fe-S) centers, to quinones in the respiratory chain. The immediate electron acceptor for the enzyme in this species is believed to be ubiquinone. Couples the redox reaction to proton translocation (for every two electrons transferred, four hydrogen ions are translocated across the cytoplasmic membrane), and thus conserves the redox energy in a proton gradient. This chain is NADH-quinone oxidoreductase subunit I 2, found in Streptomyces coelicolor (strain ATCC BAA-471 / A3(2) / M145).